We begin with the raw amino-acid sequence, 348 residues long: Rhodopsin (348 aa).

M1 is subject to N-acetylmethionine. Residues 1–36 (MNGTEGPNFYVPFSNKTGVVRSPFEYPQYYLAEPWQ) are Extracellular-facing. N2 and N15 each carry an N-linked (GlcNAc...) asparagine glycan. Residues 37–61 (FSMLAAYMFLLIVLGFPINFLTLYV) traverse the membrane as a helical segment. The Cytoplasmic segment spans residues 62–73 (TVQHKKLRTPLN). A helical membrane pass occupies residues 74–96 (YILLNLAVADLFMVFGGFTTTLY). The Extracellular portion of the chain corresponds to 97–110 (TSLHGYFVFGPTGC). C110 and C187 are joined by a disulfide. Residues 111 to 133 (NLEGFFATLGGEIALWSLVVLAI) form a helical membrane-spanning segment. A 'Ionic lock' involved in activated form stabilization motif is present at residues 134–136 (ERY). The Cytoplasmic portion of the chain corresponds to 134–152 (ERYVVVCKPMSNFRFGENH). Residues 153–173 (AIMGVGLTWVMALACAAPPLV) traverse the membrane as a helical segment. Topologically, residues 174–202 (GWSRYIPEGMQCSCGIDYYTLKPEVNNES) are extracellular. Residue E201 participates in Zn(2+) binding. A helical transmembrane segment spans residues 203–224 (FVIYMFVVHFTIPMIVIFFCYG). Residues 225–252 (QLVFTVKEAAAQQQESATTQKAEKEVTR) are Cytoplasmic-facing. Residues 253 to 274 (MVIIMVIAFLICWVPYASVAFY) traverse the membrane as a helical segment. Over 275–286 (IFTHQGFNFGPI) the chain is Extracellular. Position 279 (Q279) interacts with Zn(2+). Residues 287-308 (FMTLPAFFAKAAAIYNPVIYIM) traverse the membrane as a helical segment. At K296 the chain carries N6-(retinylidene)lysine. At 309–348 (MNKQFRTCMITTLCCGKNPLGDDEVSASASKTETSQVAPA) the chain is on the cytoplasmic side. S-palmitoyl cysteine attachment occurs at residues C322 and C323. Residues 330–348 (DDEVSASASKTETSQVAPA) form an interaction with SAG region. Phosphoserine occurs at positions 334 and 338. Phosphothreonine is present on residues T340 and T342. A Phosphoserine modification is found at S343.

Belongs to the G-protein coupled receptor 1 family. Opsin subfamily. Homodimer. Interacts (phosphorylated form) with SAG. Interacts with GNAT1. Interacts with GNAT3. SAG and G-proteins compete for a common binding site. Interacts with GRK1. Interacts with PRCD; the interaction promotes PRCD stability. Forms a complex with ASAP1 and ARF4. Forms a complex with ASAP1, RAB11A, Rabin8/RAB3IP, ARF4 and RAB11FIP3; the complex regulates Golgi-to-cilia rhodopsin/RHO transport in photoreceptors. Phosphorylated on some or all of the serine and threonine residues present in the C-terminal region. In terms of processing, contains one covalently linked retinal chromophore. Upon light absorption, the covalently bound 11-cis-retinal is converted to all-trans-retinal. After hydrolysis of the Schiff base and release of the covalently bound all-trans-retinal, active rhodopsin is regenerated by binding of a fresh molecule of 11-cis-retinal.

It is found in the membrane. The protein localises to the cell projection. It localises to the cilium. Its subcellular location is the photoreceptor outer segment. Its function is as follows. Photoreceptor required for image-forming vision at low light intensity. Required for photoreceptor cell viability after birth. Light-induced isomerization of 11-cis to all-trans retinal triggers a conformational change that activates signaling via G-proteins. Subsequent receptor phosphorylation mediates displacement of the bound G-protein alpha subunit by the arrestin SAG and terminates signaling. The sequence is that of Rhodopsin (RHO) from Pagophilus groenlandicus (Harp seal).